The sequence spans 534 residues: Coiled-coil domain-containing protein 183 (534 aa).

3 coiled-coil regions span residues 10–54 (EAQI…NLRR), 136–209 (DATK…DMTV), and 321–406 (RFLA…LLVI).

The polypeptide is Coiled-coil domain-containing protein 183 (Ccdc183) (Mus musculus (Mouse)).